The following is a 247-amino-acid chain: Cell division protein ZapD (247 aa).

This sequence belongs to the ZapD family. Interacts with FtsZ.

It localises to the cytoplasm. In terms of biological role, cell division factor that enhances FtsZ-ring assembly. Directly interacts with FtsZ and promotes bundling of FtsZ protofilaments, with a reduction in FtsZ GTPase activity. The protein is Cell division protein ZapD of Escherichia fergusonii (strain ATCC 35469 / DSM 13698 / CCUG 18766 / IAM 14443 / JCM 21226 / LMG 7866 / NBRC 102419 / NCTC 12128 / CDC 0568-73).